Consider the following 266-residue polypeptide: Enterotoxin type C-3 (266 aa).

An N-terminal signal peptide occupies residues 1–27 (MYKRLFISRVILIFALILVISTPNVLA). Aspartate 36 and aspartate 110 together coordinate Zn(2+). Cysteine 120 and cysteine 137 are oxidised to a cystine. Zn(2+) contacts are provided by histidine 145 and histidine 149.

This sequence belongs to the staphylococcal/streptococcal toxin family. Interacts with MHC class II molecules composed of alpha/HLA-DRA and beta/HLA-DRB1 chains. Interacts with host T-cell receptor/TCR beta variable chain TRBV8-2.

It localises to the secreted. Functionally, staphylococcal enterotoxin that activates the host immune system by binding as unprocessed molecules to major histocompatibility (MHC) complex class II and T-cell receptor (TCR) molecules. In turn, this ternary complex activates a large number of T-lymphocytes initiating a systemic release of pro-inflammatory cytokines. Also causes the intoxication staphylococcal food poisoning syndrome. This is Enterotoxin type C-3 (entC3) from Staphylococcus aureus.